Consider the following 368-residue polypeptide: 3-dehydroquinate synthase (368 aa).

Residues 71–76 (DGESFK), 105–109 (GVIGD), 129–130 (TT), Lys142, Lys151, and 169–172 (TLRT) contribute to the NAD(+) site. The Zn(2+) site is built by Glu184, His247, and His264.

The protein belongs to the sugar phosphate cyclases superfamily. Dehydroquinate synthase family. The cofactor is NAD(+). Co(2+) is required as a cofactor. Zn(2+) serves as cofactor.

Its subcellular location is the cytoplasm. It carries out the reaction 7-phospho-2-dehydro-3-deoxy-D-arabino-heptonate = 3-dehydroquinate + phosphate. It participates in metabolic intermediate biosynthesis; chorismate biosynthesis; chorismate from D-erythrose 4-phosphate and phosphoenolpyruvate: step 2/7. In terms of biological role, catalyzes the conversion of 3-deoxy-D-arabino-heptulosonate 7-phosphate (DAHP) to dehydroquinate (DHQ). The polypeptide is 3-dehydroquinate synthase (Ralstonia nicotianae (strain ATCC BAA-1114 / GMI1000) (Ralstonia solanacearum)).